The following is a 146-amino-acid chain: Cytochrome c oxidase subunit 5A, mitochondrial (146 aa).

Residues methionine 1 to tyrosine 37 constitute a mitochondrion transit peptide. The short motif at leucine 2 to arginine 16 is the SIFI-degron element. 2 positions are modified to N6-acetyllysine: lysine 83 and lysine 109. Threonine 137 bears the Phosphothreonine mark.

This sequence belongs to the cytochrome c oxidase subunit 5A family. As to quaternary structure, component of the cytochrome c oxidase (complex IV, CIV), a multisubunit enzyme composed of 14 subunits. The complex is composed of a catalytic core of 3 subunits MT-CO1, MT-CO2 and MT-CO3, encoded in the mitochondrial DNA, and 11 supernumerary subunits COX4I, COX5A, COX5B, COX6A, COX6B, COX6C, COX7A, COX7B, COX7C, COX8 and NDUFA4, which are encoded in the nuclear genome. The complex exists as a monomer or a dimer and forms supercomplexes (SCs) in the inner mitochondrial membrane with NADH-ubiquinone oxidoreductase (complex I, CI) and ubiquinol-cytochrome c oxidoreductase (cytochrome b-c1 complex, complex III, CIII), resulting in different assemblies (supercomplex SCI(1)III(2)IV(1) and megacomplex MCI(2)III(2)IV(2)). Interacts with AFG1L. Interacts with RAB5IF. In response to mitochondrial stress, the precursor protein is ubiquitinated by the SIFI complex in the cytoplasm before mitochondrial import, leading to its degradation. Within the SIFI complex, UBR4 initiates ubiquitin chain that are further elongated or branched by KCMF1.

The protein localises to the mitochondrion inner membrane. It functions in the pathway energy metabolism; oxidative phosphorylation. Functionally, component of the cytochrome c oxidase, the last enzyme in the mitochondrial electron transport chain which drives oxidative phosphorylation. The respiratory chain contains 3 multisubunit complexes succinate dehydrogenase (complex II, CII), ubiquinol-cytochrome c oxidoreductase (cytochrome b-c1 complex, complex III, CIII) and cytochrome c oxidase (complex IV, CIV), that cooperate to transfer electrons derived from NADH and succinate to molecular oxygen, creating an electrochemical gradient over the inner membrane that drives transmembrane transport and the ATP synthase. Cytochrome c oxidase is the component of the respiratory chain that catalyzes the reduction of oxygen to water. Electrons originating from reduced cytochrome c in the intermembrane space (IMS) are transferred via the dinuclear copper A center (CU(A)) of subunit 2 and heme A of subunit 1 to the active site in subunit 1, a binuclear center (BNC) formed by heme A3 and copper B (CU(B)). The BNC reduces molecular oxygen to 2 water molecules using 4 electrons from cytochrome c in the IMS and 4 protons from the mitochondrial matrix. This is Cytochrome c oxidase subunit 5A, mitochondrial (Cox5a) from Mus musculus (Mouse).